The following is a 300-amino-acid chain: MTPSALFHKRLIEQFTIFLSVDRGISPLSVQAYCQDVLLFLQRASIEATDRINQESVFLFVEKCHKAKESETTLARRLIALKVFFHFLKDAKMLDQQPFIEHPKIWKRLPSILSTEEVNSLLDQPLNIPNLDTHIASRDAAILYTFYATGIRVSELCDLCIGDISDDFIRVTGKGRKTRLVPISIKAKQAIDAYLSSFRDELQKKNPSEEHVFLSIRGKKLDRSCVWKRITFYAKLVTTKRISPHSLRHAFATHLLNNHADLRIIQEMLGHSRISSTEIYTHVASESLIEKFHTYHPRDI.

The Core-binding (CB) domain maps to 6-89 (LFHKRLIEQF…ALKVFFHFLK (84 aa)). The Tyr recombinase domain maps to 108–293 (RLPSILSTEE…ASESLIEKFH (186 aa)). Active-site residues include R152, K174, H245, R248, and H271. Y280 (O-(3'-phospho-DNA)-tyrosine intermediate) is an active-site residue.

It belongs to the 'phage' integrase family. XerD subfamily. As to quaternary structure, forms a cyclic heterotetrameric complex composed of two molecules of XerC and two molecules of XerD.

It is found in the cytoplasm. Functionally, site-specific tyrosine recombinase, which acts by catalyzing the cutting and rejoining of the recombining DNA molecules. The XerC-XerD complex is essential to convert dimers of the bacterial chromosome into monomers to permit their segregation at cell division. It also contributes to the segregational stability of plasmids. The polypeptide is Tyrosine recombinase XerD (Chlamydia trachomatis serovar D (strain ATCC VR-885 / DSM 19411 / UW-3/Cx)).